The following is a 491-amino-acid chain: Cobyric acid synthase (491 aa).

The 192-residue stretch at 250-441 (DLQITVVRLP…LHGLFDNGPW (192 aa)) folds into the GATase cobBQ-type domain. The Nucleophile role is filled by Cys-331. The active site involves His-433.

This sequence belongs to the CobB/CobQ family. CobQ subfamily.

It functions in the pathway cofactor biosynthesis; adenosylcobalamin biosynthesis. In terms of biological role, catalyzes amidations at positions B, D, E, and G on adenosylcobyrinic A,C-diamide. NH(2) groups are provided by glutamine, and one molecule of ATP is hydrogenolyzed for each amidation. The protein is Cobyric acid synthase of Trichormus variabilis (strain ATCC 29413 / PCC 7937) (Anabaena variabilis).